The primary structure comprises 572 residues: Mitochondrial distribution and morphology protein 34 (572 aa).

Residues 1–195 enclose the SMP-LTD domain; that stretch reads MAFNFNWSPL…LPAIIHRLSL (195 aa). 4 disordered regions span residues 212 to 236, 321 to 426, 477 to 522, and 553 to 572; these read TASA…VDAL, VGSM…PDND, SATP…DNPT, and CGPF…AYGH. Residues 330 to 348 are compositionally biased toward low complexity; it reads SASMVSSQSRSSTPSHTFS. Residues 358–370 are compositionally biased toward basic residues; sequence RHSKAHARKRKKR. Over residues 371–381 the composition is skewed to basic and acidic residues; sequence VVDLRRPKTTD. Polar residues-rich tracts occupy residues 387–400 and 500–511; these read SDES…SAPS and DSSAGSSRQLPS.

This sequence belongs to the MDM34 family. As to quaternary structure, component of the ER-mitochondria encounter structure (ERMES) or MDM complex, composed of mmm1, mdm10, mdm12 and mdm34.

Its subcellular location is the mitochondrion outer membrane. Functionally, component of the ERMES/MDM complex, which serves as a molecular tether to connect the endoplasmic reticulum (ER) and mitochondria. Components of this complex are involved in the control of mitochondrial shape and protein biogenesis, and function in nonvesicular lipid trafficking between the ER and mitochondria. Mdm34 is required for the interaction of the ER-resident membrane protein mmm1 and the outer mitochondrial membrane-resident beta-barrel protein mdm10. This chain is Mitochondrial distribution and morphology protein 34, found in Aspergillus fumigatus (strain CBS 144.89 / FGSC A1163 / CEA10) (Neosartorya fumigata).